A 184-amino-acid chain; its full sequence is MKSLVAFLVVLSILRIQSQAKEVFNIFVPGNNGGNVQETVTIDNQENTATINIHSGSCSSTTIFDYKHGYIASRVLSRRACYIIKMDHKAIPALDKLQRFLYEKQTMNAMASTEYTWVKYNPLKSLITKVDWFLFGSPIEQLCKHIPLYEGEVATKPREVGTGGCAKVGILGILGISICGGIHL.

An N-terminal signal peptide occupies residues 1–20; the sequence is MKSLVAFLVVLSILRIQSQA. The region spanning 54–151 is the BRICHOS domain; sequence HSGSCSSTTI…LCKHIPLYEG (98 aa). An intrachain disulfide couples Cys-81 to Cys-143.

In terms of assembly, heterodimer with TFF1; disulfide linked. Interacts with TFF2.

It localises to the secreted. This chain is Gastrokine-2 (Gkn2), found in Rattus norvegicus (Rat).